Consider the following 536-residue polypeptide: NSSRTSSAASDLHGEDMIVTPFAQVLASLRTVRSNVAALAHGAGSATRQALLGTPPQSSQQAAPAEESGLQLAQETLEELDWCLEQLETLQTRRSVGEMASNKFKRMLNRELTHLSETSRSGNQVSEYISQTFLDQQAEVELPAPPTEDHPWPMAQITGLRKSCHTSLPTAAIPRFGVQTDQEEQLAKELEDTNKWGLDVFKVAELSGNRPLTAVIFRVLQERDLLKTFQIPADTLLRYLLTLEGHYHSNVAYHNSIHAADVVQSAHVLLGTPALEAVFTDLEVLAAIFACAIHDVDHPGVSNQFLINTNSELALMYNDSSVLENHHLAVGFKLLQGENCDIFQNLSTKQKLSLRRMVIDMVLATDMSKHMSLLADLKTMVETKKVTSLGVLLLDNYSDRIQVLQSLVHCADLSNPAKPLPLYRQWTERIMAEFFQQGDRERESGLDISPMCDKHTASVEKSQVGFIDYIAHPLWETWADLVHPDAQELLDTLEDNREWYQSRVPCSPPHAIGPDRFKFELTLEETEEEEEEDERH.

Residues Gln-49–Gly-69 are disordered. The 330-residue stretch at Val-178–Ser-507 folds into the PDEase domain. Residue His-254 is the Proton donor of the active site. Residue His-254 coordinates 3',5'-cyclic AMP. Residues His-254 and His-258 each contribute to the AMP site. Zn(2+) is bound by residues His-258, His-294, Asp-295, and Asp-412. Asp-295, Asp-412, Gln-463, and Phe-466 together coordinate AMP. Asp-295 is a binding site for Mg(2+). Position 295 (Asp-295) interacts with Mn(2+). Residues Gln-463 and Phe-466 each coordinate 3',5'-cyclic AMP. Ser-507 carries the phosphoserine modification.

The protein belongs to the cyclic nucleotide phosphodiesterase family. PDE4 subfamily. Part of a complex containing AKAP5, ADCY5, ADCY6 and PKD2. Zn(2+) serves as cofactor. Mg(2+) is required as a cofactor. It depends on Mn(2+) as a cofactor.

The protein resides in the cell projection. It is found in the cilium. It catalyses the reaction 3',5'-cyclic AMP + H2O = AMP + H(+). Its pathway is purine metabolism; 3',5'-cyclic AMP degradation; AMP from 3',5'-cyclic AMP: step 1/1. Its function is as follows. Hydrolyzes the second messenger cAMP, which is a key regulator of many important physiological processes. This chain is 3',5'-cyclic-AMP phosphodiesterase 4C, found in Rattus norvegicus (Rat).